We begin with the raw amino-acid sequence, 725 residues long: Ribonuclease R (725 aa).

The RNB domain occupies 236–559 (RKDLRDKLII…QLHRLIKQMV (324 aa)). The 79-residue stretch at 611–689 (GKSLKAQIVS…NLGKVDVVLE (79 aa)) folds into the S1 motif domain.

It belongs to the RNR ribonuclease family. RNase R subfamily.

Its subcellular location is the cytoplasm. It carries out the reaction Exonucleolytic cleavage in the 3'- to 5'-direction to yield nucleoside 5'-phosphates.. Functionally, 3'-5' exoribonuclease that releases 5'-nucleoside monophosphates and is involved in maturation of structured RNAs. The protein is Ribonuclease R of Mycoplasmopsis pulmonis (strain UAB CTIP) (Mycoplasma pulmonis).